An 85-amino-acid polypeptide reads, in one-letter code: UPF0213 protein NP_0776A (85 aa).

The GIY-YIG domain occupies 3–78 (ADHYVYVLSC…KSLSRAKKER (76 aa)). Positions 58-70 (KSAAMQREHEIKS) are enriched in basic and acidic residues. The segment at 58–85 (KSAAMQREHEIKSLSRAKKERLVADETG) is disordered.

The protein belongs to the UPF0213 family.

In Natronomonas pharaonis (strain ATCC 35678 / DSM 2160 / CIP 103997 / JCM 8858 / NBRC 14720 / NCIMB 2260 / Gabara) (Halobacterium pharaonis), this protein is UPF0213 protein NP_0776A.